The chain runs to 386 residues: 2-isopropylmalate synthase (386 aa).

In terms of domain architecture, Pyruvate carboxyltransferase spans 12 to 265 (VRIFDTTLRD…EVNIKTYKLY (254 aa)). Residues D21, H203, H205, and N239 each contribute to the a divalent metal cation site.

Belongs to the alpha-IPM synthase/homocitrate synthase family. In terms of assembly, homodimer. It depends on a divalent metal cation as a cofactor.

The enzyme catalyses 3-methyl-2-oxobutanoate + acetyl-CoA + H2O = (2S)-2-isopropylmalate + CoA + H(+). The protein operates within amino-acid biosynthesis; L-leucine biosynthesis; L-leucine from 3-methyl-2-oxobutanoate: step 1/4. Its function is as follows. Catalyzes the condensation of the acetyl group of acetyl-CoA with 3-methyl-2-oxobutanoate (2-oxoisovalerate) to form 3-carboxy-3-hydroxy-4-methylpentanoate (2-isopropylmalate). Carries out the first step of the leucine biosynthesis pathway. The chain is 2-isopropylmalate synthase (leuA) from Sulfurisphaera tokodaii (strain DSM 16993 / JCM 10545 / NBRC 100140 / 7) (Sulfolobus tokodaii).